Here is a 603-residue protein sequence, read N- to C-terminus: Methionine--tRNA ligase (603 aa).

The short motif at 14 to 24 is the 'HIGH' region element; it reads PYANGPRHIGH. Residues cysteine 146, cysteine 149, cysteine 159, and cysteine 162 each coordinate Zn(2+). Residues 354–358 carry the 'KMSKS' region motif; that stretch reads KFSSS. Residue serine 357 participates in ATP binding.

This sequence belongs to the class-I aminoacyl-tRNA synthetase family. MetG type 1 subfamily. As to quaternary structure, monomer. Requires Zn(2+) as cofactor.

It is found in the cytoplasm. It carries out the reaction tRNA(Met) + L-methionine + ATP = L-methionyl-tRNA(Met) + AMP + diphosphate. Its function is as follows. Is required not only for elongation of protein synthesis but also for the initiation of all mRNA translation through initiator tRNA(fMet) aminoacylation. The chain is Methionine--tRNA ligase from Salinispora tropica (strain ATCC BAA-916 / DSM 44818 / JCM 13857 / NBRC 105044 / CNB-440).